The chain runs to 705 residues: MSGFLIANALLFLIVTAYAVYLFVYLVKTRLAYIKLGQKEQFDQRFKERLHAIWVNVFGQKKLLKDKKSGIIHVMFFYGFILVQFGAIDFIIKGLAPGRNLSLGPVYPAFTFFQEIVTFLILIAVGWAFYRRYIEKLVRLKRGFKAGLVLIFIGGLMLTVLLGNGMNLIWHEHGLSWSEPIASGIAFMLSGVGKTGAAVIFYIAWWIHLLFLLSFLVYVPQSKHAHLIAGPANVFFNRMESAGKLEKIDFTDETKESYGAGKIEDFRQSQLLDLYACVECGRCTNMCPATGTGKMLSPMDLILRLRDHLTEKGAAVTSRSPWVPAAAFRHTRGNQLAAASAGSGSQEAAAALDYNPSLIGDVITEEEIWACTTCRNCEDQCPVMNEHVDKIIDLRRYLVLTEGKMDSDAQRAMTSIERQGNPWGLNRKERENWRDEAPDAEIPTVKEMKKEGKEFEYLFWVGSMGSYDNRSQKIAISFAKLLNHAGVSFAILGNKEKNSGDTPRRLGNEFLFQELAEKNISEFEKNDVKKIVTIDPHAYNLFKNEYPDFGFEGEVYHHTEVLAELVKNGKLRPQHPLHETITFHDSCYLGRYNEVYDPPREILKAIPGVQLVEMERSRETGMCCGAGGGLMWMEEETGNRINVARTEQALAVNPSVISSGCPYCLTMLGDGTKAKEAEDQVKTYDVVELLAQSVLGADLKMGEKQ.

The next 6 membrane-spanning stretches (helical) occupy residues 4–24 (FLIA…YLFV), 71–91 (IIHV…IDFI), 109–129 (AFTF…GWAF), 146–166 (AGLV…GNGM), 173–193 (HGLS…SGVG), and 199–219 (VIFY…LVYV). 2 consecutive 4Fe-4S ferredoxin-type domains span residues 268-298 (QSQL…MLSP) and 360-391 (GDVI…VDKI). The [4Fe-4S] cluster site is built by Cys-277, Cys-280, Cys-283, Cys-287, Cys-371, Cys-374, Cys-377, and Cys-381.

Requires [4Fe-4S] cluster as cofactor.

It is found in the cell membrane. In Bacillus subtilis (strain 168), this protein is Probable iron-sulfur-binding oxidoreductase FadF (fadF).